The sequence spans 56 residues: Large ribosomal subunit protein bL32 (56 aa).

Residues 1 to 28 (MAVQQNRKTRSKRGMRRSHDALTTAALS) form a disordered region. Residues 7 to 16 (RKTRSKRGMR) show a composition bias toward basic residues.

It belongs to the bacterial ribosomal protein bL32 family.

This is Large ribosomal subunit protein bL32 from Vibrio vulnificus (strain CMCP6).